The chain runs to 474 residues: Adenosylhomocysteinase (474 aa).

Substrate contacts are provided by Thr-53, Asp-135, and Glu-197. 198-200 (TTT) contacts NAD(+). Substrate is bound by residues Lys-227 and Asp-231. Residues Asn-232, 261–266 (GYGDVG), Glu-284, Asn-319, 340–342 (IGH), and Asn-388 contribute to the NAD(+) site.

Belongs to the adenosylhomocysteinase family. Requires NAD(+) as cofactor.

The protein resides in the cytoplasm. The catalysed reaction is S-adenosyl-L-homocysteine + H2O = L-homocysteine + adenosine. It functions in the pathway amino-acid biosynthesis; L-homocysteine biosynthesis; L-homocysteine from S-adenosyl-L-homocysteine: step 1/1. Its function is as follows. May play a key role in the regulation of the intracellular concentration of adenosylhomocysteine. This chain is Adenosylhomocysteinase, found in Corynebacterium glutamicum (strain ATCC 13032 / DSM 20300 / JCM 1318 / BCRC 11384 / CCUG 27702 / LMG 3730 / NBRC 12168 / NCIMB 10025 / NRRL B-2784 / 534).